The following is a 433-amino-acid chain: N-lysine methyltransferase SMYD2 (433 aa).

In terms of domain architecture, SET spans 7-241; that stretch reads GGLERFCSAG…PGDEVFTSYI (235 aa). An S-adenosyl-L-methionine-binding site is contributed by 17–19; that stretch reads KGR. Residues Cys52, Cys55, Cys65, Cys68, Cys74, Cys78, His86, and Cys90 each contribute to the Zn(2+) site. The MYND-type zinc finger occupies 52 to 90; sequence CECCFARKEGLSKCGRCKQAFYCDVECQKEDWPLHKLEC. Residues His137, 206–207, and 258–260 each bind S-adenosyl-L-methionine; these read NH and YFF. Ser283 is modified (phosphoserine).

This sequence belongs to the class V-like SAM-binding methyltransferase superfamily. In terms of assembly, interacts with RNA polymerase II and HELZ. Interacts with SIN3A and HDAC1. Interacts (via MYND-type zinc finger) with EPB41L3. Interacts (via SET domain) with p53/TP53. Interacts with RB1 and HSP90AA1.

The protein resides in the cytoplasm. It localises to the cytosol. The protein localises to the nucleus. It carries out the reaction L-lysyl(4)-[histone H3] + 3 S-adenosyl-L-methionine = N(6),N(6),N(6)-trimethyl-L-lysyl(4)-[histone H3] + 3 S-adenosyl-L-homocysteine + 3 H(+). It catalyses the reaction L-lysyl-[protein] + S-adenosyl-L-methionine = N(6)-methyl-L-lysyl-[protein] + S-adenosyl-L-homocysteine + H(+). Its function is as follows. Protein-lysine N-methyltransferase that methylates both histones and non-histone proteins, including p53/TP53 and RB1. Specifically trimethylates histone H3 'Lys-4' (H3K4me3) in vivo. The activity requires interaction with HSP90alpha. Shows even higher methyltransferase activity on p53/TP53. Monomethylates 'Lys-370' of p53/TP53, leading to decreased DNA-binding activity and subsequent transcriptional regulation activity of p53/TP53. Monomethylates RB1 at 'Lys-860'. This is N-lysine methyltransferase SMYD2 (Smyd2) from Rattus norvegicus (Rat).